A 433-amino-acid chain; its full sequence is Zinc carboxypeptidase A 1 (433 aa).

A signal peptide spans 1–28; that stretch reads MVRLNSAAGSRWWAPAMAILAVALSVEA. Residues 130–423 form the Peptidase M14 domain; sequence DYHTLEEIHA…DSLITLLEES (294 aa). Zn(2+) is bound by residues His-187 and Glu-190. Cys-253 and Cys-276 are joined by a disulfide. Position 312 (His-312) interacts with Zn(2+). Glu-387 (proton donor/acceptor) is an active-site residue.

The protein belongs to the peptidase M14 family. Zn(2+) is required as a cofactor. In terms of tissue distribution, expressed in the posterior midgut in pupae and female adults.

The protein localises to the secreted. Involved in the digestion of the blood meal. The chain is Zinc carboxypeptidase A 1 from Anopheles gambiae (African malaria mosquito).